We begin with the raw amino-acid sequence, 493 residues long: (+)-menthofuran synthase (493 aa).

Met1 is a topological domain (cytoplasmic). Residues 2-19 (AALLVFFSVSLILLAVLF) form a helical; Signal-anchor for type II membrane protein membrane-spanning segment. At 20–493 (HKRKSSLSSR…LLVLATPRQS (474 aa)) the chain is on the lumenal side. A glycan (N-linked (GlcNAc...) asparagine) is linked at Asn169. Cys434 serves as a coordination point for heme.

This sequence belongs to the cytochrome P450 family. Heme serves as cofactor.

The protein localises to the membrane. It carries out the reaction (R)-pulegone + reduced [NADPH--hemoprotein reductase] + O2 = (R)-menthofuran + oxidized [NADPH--hemoprotein reductase] + 2 H2O + H(+). It participates in secondary metabolite biosynthesis; terpenoid biosynthesis. Monoterpene synthase that catalyzes the formation of (+)-menthofuran from (+)-pulegone. The chain is (+)-menthofuran synthase from Mentha piperita (Peppermint).